Consider the following 336-residue polypeptide: Homoserine dehydrogenase (336 aa).

Phe8 is an NADPH binding site. Positions 10, 11, and 94 each coordinate NAD(+). NADPH contacts are provided by Ile11, Thr94, and Lys123. NADP(+) is bound by residues Ile11, Thr94, and Lys123. Residues Glu147, Val150, and Gly152 each contribute to the Na(+) site. NADP(+)-binding residues include Gly205 and Glu208. L-homoserine-binding residues include Glu208 and Asp219. The active-site Proton donor is the Lys223. NADPH is bound at residue Gly315. Gly315 contributes to the NAD(+) binding site. Gly315 provides a ligand contact to NADP(+).

It belongs to the homoserine dehydrogenase family. A metal cation is required as a cofactor.

It catalyses the reaction L-homoserine + NADP(+) = L-aspartate 4-semialdehyde + NADPH + H(+). The catalysed reaction is L-homoserine + NAD(+) = L-aspartate 4-semialdehyde + NADH + H(+). The protein operates within amino-acid biosynthesis; L-methionine biosynthesis via de novo pathway; L-homoserine from L-aspartate: step 3/3. It functions in the pathway amino-acid biosynthesis; L-threonine biosynthesis; L-threonine from L-aspartate: step 3/5. Functionally, catalyzes the conversion of L-aspartate-beta-semialdehyde (L-Asa) to L-homoserine (L-Hse), the third step in the biosynthesis of threonine and methionine from aspartate. This chain is Homoserine dehydrogenase (hom), found in Methanocaldococcus jannaschii (strain ATCC 43067 / DSM 2661 / JAL-1 / JCM 10045 / NBRC 100440) (Methanococcus jannaschii).